A 410-amino-acid chain; its full sequence is Monoglucosyldiacylglycerol epimerase (410 aa).

An N-terminal signal peptide occupies residues 1 to 14 (MAMAWLMGLGLALA). 2 helical membrane passes run 71-91 (ALVM…WQGF) and 96-116 (LILA…SAIA). Residue Tyr320 is the Proton acceptor of the active site. A helical transmembrane segment spans residues 380–400 (IIVTINPITFIAFPVKEFFVS).

This sequence belongs to the short-chain dehydrogenases/reductases (SDR) family.

The protein resides in the membrane. It catalyses the reaction a 1,2-diacyl-3-O-(beta-D-glucopyranosyl)-sn-glycerol = a 1,2-diacyl-3-O-(beta-D-galactosyl)-sn-glycerol. Involved in the biosynthesis of galactolipids found in the photosynthetic membranes. Catalyzes the isomerization of monoglucosyldiacylglycerol (GlcDG) to yield monogalactosyldiacylglycerol (MGDG). The protein is Monoglucosyldiacylglycerol epimerase of Synechocystis sp. (strain ATCC 27184 / PCC 6803 / Kazusa).